We begin with the raw amino-acid sequence, 353 residues long: UPF0283 membrane protein YcjF (353 aa).

A disordered region spans residues 16 to 35 (KEESTSAFKAQQTFSEAESR). The segment covering 20–31 (TSAFKAQQTFSE) has biased composition (polar residues). Transmembrane regions (helical) follow at residues 70–90 (MVMG…VQWT), 100–120 (VALG…GSVV), and 213–233 (ESTL…FIAW).

Belongs to the UPF0283 family.

It is found in the cell inner membrane. The sequence is that of UPF0283 membrane protein YcjF from Salmonella heidelberg (strain SL476).